The chain runs to 250 residues: Methionine aminopeptidase (250 aa).

Residue His77 participates in substrate binding. 3 residues coordinate a divalent metal cation: Asp95, Asp106, and His169. His176 serves as a coordination point for substrate. Positions 202 and 233 each coordinate a divalent metal cation.

Belongs to the peptidase M24A family. Methionine aminopeptidase type 1 subfamily. In terms of assembly, monomer. The cofactor is Co(2+). Zn(2+) is required as a cofactor. Requires Mn(2+) as cofactor. Fe(2+) serves as cofactor.

The catalysed reaction is Release of N-terminal amino acids, preferentially methionine, from peptides and arylamides.. Its function is as follows. Removes the N-terminal methionine from nascent proteins. The N-terminal methionine is often cleaved when the second residue in the primary sequence is small and uncharged (Met-Ala-, Cys, Gly, Pro, Ser, Thr, or Val). Requires deformylation of the N(alpha)-formylated initiator methionine before it can be hydrolyzed. This chain is Methionine aminopeptidase, found in Clostridium acetobutylicum (strain ATCC 824 / DSM 792 / JCM 1419 / IAM 19013 / LMG 5710 / NBRC 13948 / NRRL B-527 / VKM B-1787 / 2291 / W).